Reading from the N-terminus, the 528-residue chain is CTD kinase subunit alpha (528 aa).

Positions 1 to 15 are enriched in polar residues; it reads MSYNNGNTYSKSYSR. Positions 1–148 are disordered; it reads MSYNNGNTYS…NTSNDIKNGY (148 aa). The residue at position 14 (Ser14) is a Phosphoserine; by autocatalysis. A Nuclear localization signal motif is present at residues 37–44; it reads PPKRIRTD. Positions 45–103 are enriched in polar residues; the sequence is SGYQSNMDNISSHRVNSNDQPGHTKSRGNNNLSRYNDTSFQTSSRYQGSRYNNNNTSYE. The span at 104–118 shows a compositional bias: basic and acidic residues; it reads NRPKSIKRDETKAEF. Polar residues predominate over residues 134–144; the sequence is YNNSSNTSNDI. The region spanning 183 to 469 is the Protein kinase domain; that stretch reads YLRIMQVGEG…ATEALQSDYF (287 aa). Residues 189–197 and Lys212 contribute to the ATP site; that span reads VGEGTYGKV. Asp306 (proton acceptor) is an active-site residue. Position 338 is a phosphothreonine (Thr338). Positions 497-528 are disordered; that stretch reads QKRPNILSTNTNNKGNGNSNNNNNNNNDDDDK. The segment covering 504–522 has biased composition (low complexity); sequence STNTNNKGNGNSNNNNNNN.

Belongs to the protein kinase superfamily. CMGC Ser/Thr protein kinase family. CDC2/CDKX subfamily. In terms of assembly, CTDK-I consists of three subunits, CTK1, CTK2 and CTK3 (also called alpha, beta and gamma). Interacts directly with the CTK2 and CTK3 subunits, this interaction is required for kinase activity. Interacts with RNA polymerase I. Interacts with SNF1, but only at low glucose concentrations. Interacts with translating ribosomes. In terms of processing, phosphorylated on Thr-338 by CAK1. Phosphorylation is essential for the elevated CTD Ser-2 phosphorylation and required to activate transcription of stationary-phase genes during the diauxic shift.

The protein localises to the nucleus. Its subcellular location is the nucleolus. The protein resides in the cytoplasm. The enzyme catalyses [DNA-directed RNA polymerase] + ATP = phospho-[DNA-directed RNA polymerase] + ADP + H(+). Functionally, catalytic subunit of the CTDK-I complex, which hyperphosphorylates the C-terminal heptapeptide repeat domain (CTD) of the largest RNA polymerase II subunit. CTDK-I phosphorylates 'Ser-5' if the CTD substrate is not phosphorylated at 'Ser-5', but will phosphorylate 'Ser-2' of a CTD substrate if 'Ser-5' is already phosphorylated. CTDK-I is also more reactive toward substrates that are prephosphorylated at 'Ser-2' or 'Ser-5' compared with an unphosphorylated CTD substrate, therefore efficiently creating doubly phosphorylated CTD repeats. Involved in RNA polymerase II transcriptional elongation, and through PTI1, pre-mRNA 3'-end processing. Participates in both positive and negative regulation of CTD phosphorylation. Required for DNA damage induced transcription, including the expression of the RNR genes, and reprogramming of gene expression upon amino acid starvation. Required for SET2 mediated H3K36 methylation. Also regulates H3K4 methylation. Controls the maintenance of suppressive chromatin in the coding regions of genes by both promoting H3K36 methylation, which leads to histone deacetylation, and catalyzing phosphorylation of the CTD required to localize H3K4 chromatin modification specifically to the 5' ends of genes, thereby creating a boundary for H3K4 methylation that prevents a mark associated with transcriptional initiation from spreading into the bodies of genes. Involved in RNA polymerase I transcription. Involved in telomere maintenance. Acts together with SNF1 to induce GSY2 transcription in response to glucose limitation. Involved in the adaptation to alternative carbon sources, including galactose, glycerol and ethanol, but not raffinose. Required for the integrity of the rDNA locus. Functions in translation elongation by enhancing decoding fidelity. Needed for translational accuracy by phosphorylating RPS2. The polypeptide is CTD kinase subunit alpha (CTK1) (Saccharomyces cerevisiae (strain ATCC 204508 / S288c) (Baker's yeast)).